A 396-amino-acid polypeptide reads, in one-letter code: Tyrosine--tRNA ligase (396 aa).

The 'HIGH' region motif lies at 39–48; that stretch reads PTAPDLHLGH. Residues 223-227 carry the 'KMSKS' region motif; sequence KMSKS. Residue Lys226 coordinates ATP. Positions 334–395 constitute an S4 RNA-binding domain; the sequence is LPVPQLLKQA…GKRKFARVTV (62 aa).

The protein belongs to the class-I aminoacyl-tRNA synthetase family. TyrS type 2 subfamily. Homodimer.

It is found in the cytoplasm. The enzyme catalyses tRNA(Tyr) + L-tyrosine + ATP = L-tyrosyl-tRNA(Tyr) + AMP + diphosphate + H(+). Its function is as follows. Catalyzes the attachment of tyrosine to tRNA(Tyr) in a two-step reaction: tyrosine is first activated by ATP to form Tyr-AMP and then transferred to the acceptor end of tRNA(Tyr). This Thiobacillus denitrificans (strain ATCC 25259 / T1) protein is Tyrosine--tRNA ligase.